The following is a 162-amino-acid chain: Crossover junction endodeoxyribonuclease RuvC (162 aa).

Active-site residues include D7, E67, and D140. Mg(2+)-binding residues include D7, E67, and D140.

The protein belongs to the RuvC family. As to quaternary structure, homodimer which binds Holliday junction (HJ) DNA. The HJ becomes 2-fold symmetrical on binding to RuvC with unstacked arms; it has a different conformation from HJ DNA in complex with RuvA. In the full resolvosome a probable DNA-RuvA(4)-RuvB(12)-RuvC(2) complex forms which resolves the HJ. The cofactor is Mg(2+).

Its subcellular location is the cytoplasm. It catalyses the reaction Endonucleolytic cleavage at a junction such as a reciprocal single-stranded crossover between two homologous DNA duplexes (Holliday junction).. Functionally, the RuvA-RuvB-RuvC complex processes Holliday junction (HJ) DNA during genetic recombination and DNA repair. Endonuclease that resolves HJ intermediates. Cleaves cruciform DNA by making single-stranded nicks across the HJ at symmetrical positions within the homologous arms, yielding a 5'-phosphate and a 3'-hydroxyl group; requires a central core of homology in the junction. The consensus cleavage sequence is 5'-(A/T)TT(C/G)-3'. Cleavage occurs on the 3'-side of the TT dinucleotide at the point of strand exchange. HJ branch migration catalyzed by RuvA-RuvB allows RuvC to scan DNA until it finds its consensus sequence, where it cleaves and resolves the cruciform DNA. The polypeptide is Crossover junction endodeoxyribonuclease RuvC (Wolinella succinogenes (strain ATCC 29543 / DSM 1740 / CCUG 13145 / JCM 31913 / LMG 7466 / NCTC 11488 / FDC 602W) (Vibrio succinogenes)).